The sequence spans 760 residues: Prolyl endopeptidase (760 aa).

Catalysis depends on charge relay system residues Ser609, Asp693, and His730.

Belongs to the peptidase S9A family.

The protein resides in the cytoplasm. The catalysed reaction is Hydrolysis of Pro-|-Xaa &gt;&gt; Ala-|-Xaa in oligopeptides.. Inhibited by chymostatin, Boc-Glu(NHO-Bz)-Pyrrolidide, Z-Pro-L-prolinal dimethyacetal and the peptide H-H-L-P-P-P-V-OH. Cleaves peptide bonds on the C-terminal side of prolyl residues within peptides that are up to approximately 30 amino acids long. The chain is Prolyl endopeptidase (prep) from Dictyostelium discoideum (Social amoeba).